We begin with the raw amino-acid sequence, 225 residues long: GTP-binding nuclear protein Ran (225 aa).

A Small GTPase Ran-type domain is found at 8–172; the sequence is VVAEFKLVLV…LWILRKLTGD (165 aa). Position 19 to 26 (19 to 26) interacts with GTP; that stretch reads DGGVGKTT. Positions 38-46 are switch-I; that stretch reads KRYIATQGV. Residues glycine 69, 123 to 126, and 151 to 153 each bind GTP; these read NKVD and SAK. Residues 69 to 85 form a switch-II region; that stretch reads GQEKLGGLREGYYIGAN.

It belongs to the small GTPase superfamily. Ran family. In terms of assembly, monomer. Found in a nuclear export complex with RanGTP, exportin and pre-miRNA.

Its subcellular location is the nucleus. Its function is as follows. GTP-binding protein involved in nucleocytoplasmic transport. Required for the import of protein into the nucleus and also for RNA export. Involved in chromatin condensation and control of cell cycle. This is GTP-binding nuclear protein Ran from Tetrahymena thermophila.